A 314-amino-acid chain; its full sequence is 4-hydroxy-3-methylbut-2-enyl diphosphate reductase (314 aa).

Cysteine 12 is a binding site for [4Fe-4S] cluster. Residues histidine 41 and histidine 74 each coordinate (2E)-4-hydroxy-3-methylbut-2-enyl diphosphate. Positions 41 and 74 each coordinate dimethylallyl diphosphate. Positions 41 and 74 each coordinate isopentenyl diphosphate. Cysteine 96 contributes to the [4Fe-4S] cluster binding site. Position 124 (histidine 124) interacts with (2E)-4-hydroxy-3-methylbut-2-enyl diphosphate. Residue histidine 124 participates in dimethylallyl diphosphate binding. Histidine 124 serves as a coordination point for isopentenyl diphosphate. Catalysis depends on glutamate 126, which acts as the Proton donor. Position 167 (threonine 167) interacts with (2E)-4-hydroxy-3-methylbut-2-enyl diphosphate. Cysteine 197 lines the [4Fe-4S] cluster pocket. (2E)-4-hydroxy-3-methylbut-2-enyl diphosphate-binding residues include serine 225, serine 226, asparagine 227, and serine 269. Dimethylallyl diphosphate-binding residues include serine 225, serine 226, asparagine 227, and serine 269. Isopentenyl diphosphate contacts are provided by serine 225, serine 226, asparagine 227, and serine 269.

The protein belongs to the IspH family. [4Fe-4S] cluster serves as cofactor.

The enzyme catalyses isopentenyl diphosphate + 2 oxidized [2Fe-2S]-[ferredoxin] + H2O = (2E)-4-hydroxy-3-methylbut-2-enyl diphosphate + 2 reduced [2Fe-2S]-[ferredoxin] + 2 H(+). It catalyses the reaction dimethylallyl diphosphate + 2 oxidized [2Fe-2S]-[ferredoxin] + H2O = (2E)-4-hydroxy-3-methylbut-2-enyl diphosphate + 2 reduced [2Fe-2S]-[ferredoxin] + 2 H(+). It functions in the pathway isoprenoid biosynthesis; dimethylallyl diphosphate biosynthesis; dimethylallyl diphosphate from (2E)-4-hydroxy-3-methylbutenyl diphosphate: step 1/1. The protein operates within isoprenoid biosynthesis; isopentenyl diphosphate biosynthesis via DXP pathway; isopentenyl diphosphate from 1-deoxy-D-xylulose 5-phosphate: step 6/6. Functionally, catalyzes the conversion of 1-hydroxy-2-methyl-2-(E)-butenyl 4-diphosphate (HMBPP) into a mixture of isopentenyl diphosphate (IPP) and dimethylallyl diphosphate (DMAPP). Acts in the terminal step of the DOXP/MEP pathway for isoprenoid precursor biosynthesis. In Haemophilus influenzae (strain PittGG), this protein is 4-hydroxy-3-methylbut-2-enyl diphosphate reductase.